We begin with the raw amino-acid sequence, 601 residues long: ATP-dependent lipid A-core flippase (601 aa).

An ABC transmembrane type-1 domain is found at 28-328; that stretch reads LLSVCGLIVY…LTRVNAEFQR (301 aa). 6 consecutive transmembrane segments (helical) span residues 32–52, 81–101, 160–180, 183–203, 267–287, and 296–316; these read CGLIVYGLVDAAFISFIGPFI, VLLMAPIVVILMFSLRGFANF, ALISIVRDGVTVIGMLGLMFY, WKLSLCILVIGPIMGLVITIV, AVSQPLIMVIGSFALAFVLYA, and DLTAGTFATILGAMMAMLQPI. In terms of domain architecture, ABC transporter spans 360-597; that stretch reads LRFDNVSFSY…GGMYAKLYQM (238 aa). 394-401 contacts ATP; sequence GRSGSGKS.

It belongs to the ABC transporter superfamily. Lipid exporter (TC 3.A.1.106) family. As to quaternary structure, homodimer.

The protein localises to the cell inner membrane. The enzyme catalyses ATP + H2O + lipid A-core oligosaccharideSide 1 = ADP + phosphate + lipid A-core oligosaccharideSide 2.. Functionally, involved in lipopolysaccharide (LPS) biosynthesis. Translocates lipid A-core from the inner to the outer leaflet of the inner membrane. Transmembrane domains (TMD) form a pore in the inner membrane and the ATP-binding domain (NBD) is responsible for energy generation. In Shewanella sp. (strain MR-4), this protein is ATP-dependent lipid A-core flippase.